Reading from the N-terminus, the 90-residue chain is uncharacterized protein (90 aa).

Residues 36 to 82 (DQEYSDAQMQLEDAVNALNKLWLSSNDQQREQLYRMRLQLQSLQNNM) are a coiled coil.

This is an uncharacterized protein from Bacillus subtilis (strain 168).